Consider the following 497-residue polypeptide: Probable malate:quinone oxidoreductase (497 aa).

Belongs to the MQO family. FAD serves as cofactor.

It catalyses the reaction (S)-malate + a quinone = a quinol + oxaloacetate. It participates in carbohydrate metabolism; tricarboxylic acid cycle; oxaloacetate from (S)-malate (quinone route): step 1/1. This is Probable malate:quinone oxidoreductase from Exiguobacterium sibiricum (strain DSM 17290 / CCUG 55495 / CIP 109462 / JCM 13490 / 255-15).